An 801-amino-acid chain; its full sequence is Potassium transporter 1 (801 aa).

The segment at 1–20 is disordered; it reads MSSALEVEGSGSPGVEPAAT. The Cytoplasmic segment spans residues 1–57; it reads MSSALEVEGSGSPGVEPAATATASRLKRHDSLFGDAEKVSGGKHHGGSAVSWAVTLH. Residues 58–80 traverse the membrane as a helical segment; it reads LAFQSVGIIYGDIGTSPLYVYSS. At 81–94 the chain is on the extracellular side; that stretch reads TFPDGIGHRDDLVG. Residues 95–115 form a helical membrane-spanning segment; it reads VLSLILYTLIIIPMLKYVFIV. At 116-181 the chain is on the cytoplasmic side; it reads LYANDNGDGG…HKLESSRAAK (66 aa). The chain crosses the membrane as a helical span at residues 182-202; sequence MALFFLTILGTSMVMGDGTLT. At 203-219 the chain is on the extracellular side; sequence PAISVLSAVSGIREKAP. The chain crosses the membrane as a helical span at residues 220–240; it reads NLTQTQVVLISVAILFMLFSV. Residues 241–247 lie on the Cytoplasmic side of the membrane; it reads QRFGTDK. Residues 248-268 traverse the membrane as a helical segment; that stretch reads VGYTFAPIISVWFLLIAGIGL. Over 269–298 the chain is Extracellular; the sequence is YNLVVHEITILKAFNPWYIVQYFRRNGKKG. The helical transmembrane segment at 299-319 threads the bilayer; sequence WVSLGGVVLCVTGTEGMFADL. The Cytoplasmic segment spans residues 320-328; sequence GHFNIRAVQ. The helical transmembrane segment at 329–349 threads the bilayer; it reads ISFNCILFPSVALCYIGQAAY. Over 350–375 the chain is Extracellular; it reads LRKFPENVSDTFYKSIPGKYRDRLNF. The helical transmembrane segment at 376–398 threads the bilayer; that stretch reads GPLFWPTFIVAILAAIIASQAML. Residues 399–429 lie on the Cytoplasmic side of the membrane; it reads SGAFAILSKALSLGCLPRVRVIHTSKKYEGQ. The chain crosses the membrane as a helical span at residues 430 to 450; the sequence is VYIPEVNFMMGLASIIVTIAF. Residues 451 to 461 lie on the Extracellular side of the membrane; it reads RTTTSIGNAYG. A helical membrane pass occupies residues 462-482; the sequence is ICVVTTFMVTTHLMTVVMLLI. At 483-487 the chain is on the cytoplasmic side; sequence WKKHL. Residues 488–508 traverse the membrane as a helical segment; the sequence is VFILLFYCVFGFTEVVYLSSI. Residues 509-511 lie on the Extracellular side of the membrane; sequence LSK. A helical membrane pass occupies residues 512–532; it reads FVDGGYLPFCFAMVLMTMMAT. At 533-801 the chain is on the cytoplasmic side; that stretch reads WHYVHVRRYW…LLKVGITYEI (269 aa). The segment at 679-728 is disordered; that stretch reads DDDDEAAARPRRSTSSAVHSEEAIQAASSGRTTASSVQLQAGGEPPAAMD. A compositionally biased stretch (polar residues) spans 704 to 717; sequence AASSGRTTASSVQL.

This sequence belongs to the HAK/KUP transporter (TC 2.A.72.3) family. In terms of tissue distribution, expressed almost exclusively in roots.

It localises to the cell membrane. In terms of biological role, high-affinity potassium transporter. Also transports rubidium, with the same affinity and cesium, with a lower affinity. This is Potassium transporter 1 (HAK1) from Oryza sativa subsp. japonica (Rice).